We begin with the raw amino-acid sequence, 259 residues long: Ribonuclease HII (259 aa).

A disordered region spans residues 1 to 26; the sequence is MLSTPPKLPSAHGPVHFPRRSGTGMN. Positions 55–243 constitute an RNase H type-2 domain; the sequence is APVAGADEAG…VRAQQLVLFE (189 aa). Residues D61, E62, and D152 each contribute to the a divalent metal cation site.

The protein belongs to the RNase HII family. Mn(2+) is required as a cofactor. It depends on Mg(2+) as a cofactor.

The protein resides in the cytoplasm. It catalyses the reaction Endonucleolytic cleavage to 5'-phosphomonoester.. Its function is as follows. Endonuclease that specifically degrades the RNA of RNA-DNA hybrids. This chain is Ribonuclease HII, found in Azorhizobium caulinodans (strain ATCC 43989 / DSM 5975 / JCM 20966 / LMG 6465 / NBRC 14845 / NCIMB 13405 / ORS 571).